The primary structure comprises 621 residues: Chaperone protein HscA homolog (621 aa).

This sequence belongs to the heat shock protein 70 family.

Its function is as follows. Chaperone involved in the maturation of iron-sulfur cluster-containing proteins. Has a low intrinsic ATPase activity which is markedly stimulated by HscB. This Ralstonia pickettii (strain 12J) protein is Chaperone protein HscA homolog.